Reading from the N-terminus, the 118-residue chain is Large ribosomal subunit protein bL19 (118 aa).

It belongs to the bacterial ribosomal protein bL19 family.

Its function is as follows. This protein is located at the 30S-50S ribosomal subunit interface and may play a role in the structure and function of the aminoacyl-tRNA binding site. The sequence is that of Large ribosomal subunit protein bL19 from Campylobacter jejuni subsp. doylei (strain ATCC BAA-1458 / RM4099 / 269.97).